Consider the following 508-residue polypeptide: Phenylalanine--tRNA ligase alpha subunit (508 aa).

A2 is modified (N-acetylalanine). Residues S193 and S301 each carry the phosphoserine modification. An N6-acetyllysine modification is found at K311. Residues T329, 372 to 374 (QIE), and Y412 each bind L-phenylalanine. Residue E414 participates in Mg(2+) binding. F438 contributes to the L-phenylalanine binding site.

The protein belongs to the class-II aminoacyl-tRNA synthetase family. Phe-tRNA synthetase alpha subunit type 2 subfamily. In terms of assembly, heterotetramer; dimer of two heterodimers formed by FARSA and FARSB. Mg(2+) is required as a cofactor.

Its subcellular location is the cytoplasm. It carries out the reaction tRNA(Phe) + L-phenylalanine + ATP = L-phenylalanyl-tRNA(Phe) + AMP + diphosphate + H(+). In Mus musculus (Mouse), this protein is Phenylalanine--tRNA ligase alpha subunit (Farsa).